A 201-amino-acid chain; its full sequence is MQSSPLLENLIEHLRCLPGVGPKSAQRMAYHLLQRDRSGGMNLAGALTEAMSKIGHCTHCRTFTEEESCAICNNPRRQNSGFLCVVEQPSDIPAIEQTGQFSGRYFVLMGHLSPLDGIGPKEIGLDLLQKRLQHESFYEVILATNPTVEGEATANYIAEMCFQHNIKVSRIAHGIPIGGELETVDGTTLSHSLIGRREIQL.

The C4-type zinc-finger motif lies at 57–72; it reads CTHCRTFTEEESCAIC. A Toprim domain is found at 81–176; sequence GFLCVVEQPS…KVSRIAHGIP (96 aa).

This sequence belongs to the RecR family.

Functionally, may play a role in DNA repair. It seems to be involved in an RecBC-independent recombinational process of DNA repair. It may act with RecF and RecO. In Histophilus somni (strain 129Pt) (Haemophilus somnus), this protein is Recombination protein RecR.